Here is a 20-residue protein sequence, read N- to C-terminus: Superoxide dismutase [Mn], mitochondrial (20 aa).

It belongs to the iron/manganese superoxide dismutase family. In terms of assembly, homotetramer. Mn(2+) is required as a cofactor.

It localises to the mitochondrion matrix. The enzyme catalyses 2 superoxide + 2 H(+) = H2O2 + O2. Functionally, destroys superoxide anion radicals which are normally produced within the cells and which are toxic to biological systems. The chain is Superoxide dismutase [Mn], mitochondrial (SODA) from Hordeum vulgare (Barley).